Here is a 329-residue protein sequence, read N- to C-terminus: Replication factor C small subunit (329 aa).

51-58 (GPPGTGKT) provides a ligand contact to ATP.

Belongs to the activator 1 small subunits family. RfcS subfamily. As to quaternary structure, heteromultimer composed of small subunits (RfcS) and large subunits (RfcL).

Part of the RFC clamp loader complex which loads the PCNA sliding clamp onto DNA. This chain is Replication factor C small subunit, found in Staphylothermus marinus (strain ATCC 43588 / DSM 3639 / JCM 9404 / F1).